Consider the following 488-residue polypeptide: MAAAAKATSGTKGVVRQVIGPVLDVEFPAGKLPRIYNALRIEGKNTAGQNIALTAEVQQLLGDHRIRAVAMSGTDGLVRGMEAVDTGAPISVPVGEGTLGRIMNVLGEPVDEQGPVKTDATAPIHRSAPKLTDLETKPKVFETGIKVIDLLAPYRQGGKVGLFGGAGMGKTVLIQELINNIAKEHGGVSVFGGVGERTREGNDLYEEFKDSGVINADDLSKSKVALCYGQMNEPPGARMRVGLSALTMAEHFRDVNKQDVLLFVDNIFRFVQAGSEVSALLGRMPSAVGYQPTLGTDVGELQERITSTLEGSITSIQAVYVPADDLTDPAPATTFAHLDATTVLSRGLASKGIYPAVDPLDSTSTMLQPAVVGDEHYKTARAVQSTLQRYKELQDIIAILGLDELSEDDRLTVDRARKVEKFLSQPFFVAEIFTGMPGQYVKLDETIKGFQMILSGELDDLPEAAFYLVGNIDQVKAKAEKIRSEAKG.

164–171 (GGAGMGKT) lines the ATP pocket.

It belongs to the ATPase alpha/beta chains family. In terms of assembly, F-type ATPases have 2 components, CF(1) - the catalytic core - and CF(0) - the membrane proton channel. CF(1) has five subunits: alpha(3), beta(3), gamma(1), delta(1), epsilon(1). CF(0) has four main subunits: a(1), b(1), b'(1) and c(9-12).

The protein resides in the cellular thylakoid membrane. The catalysed reaction is ATP + H2O + 4 H(+)(in) = ADP + phosphate + 5 H(+)(out). Its function is as follows. Produces ATP from ADP in the presence of a proton gradient across the membrane. The catalytic sites are hosted primarily by the beta subunits. This Synechococcus sp. (strain RCC307) protein is ATP synthase subunit beta.